A 355-amino-acid polypeptide reads, in one-letter code: Cobalt-precorrin-5B C(1)-methyltransferase (355 aa).

Belongs to the CbiD family.

It carries out the reaction Co-precorrin-5B + S-adenosyl-L-methionine = Co-precorrin-6A + S-adenosyl-L-homocysteine. Its pathway is cofactor biosynthesis; adenosylcobalamin biosynthesis; cob(II)yrinate a,c-diamide from sirohydrochlorin (anaerobic route): step 6/10. In terms of biological role, catalyzes the methylation of C-1 in cobalt-precorrin-5B to form cobalt-precorrin-6A. This is Cobalt-precorrin-5B C(1)-methyltransferase from Sulfolobus acidocaldarius (strain ATCC 33909 / DSM 639 / JCM 8929 / NBRC 15157 / NCIMB 11770).